A 250-amino-acid polypeptide reads, in one-letter code: DNA repair protein RecO (250 aa).

Belongs to the RecO family.

In terms of biological role, involved in DNA repair and RecF pathway recombination. The chain is DNA repair protein RecO from Syntrophomonas wolfei subsp. wolfei (strain DSM 2245B / Goettingen).